The following is a 200-amino-acid chain: Large ribosomal subunit protein uL4 (200 aa).

The tract at residues 43-71 (RAQKTRAEVSGSGKKPWRQKGTGRARSGD) is disordered.

This sequence belongs to the universal ribosomal protein uL4 family. As to quaternary structure, part of the 50S ribosomal subunit.

Its function is as follows. One of the primary rRNA binding proteins, this protein initially binds near the 5'-end of the 23S rRNA. It is important during the early stages of 50S assembly. It makes multiple contacts with different domains of the 23S rRNA in the assembled 50S subunit and ribosome. Functionally, forms part of the polypeptide exit tunnel. This Actinobacillus pleuropneumoniae serotype 5b (strain L20) protein is Large ribosomal subunit protein uL4.